Reading from the N-terminus, the 237-residue chain is Protein GrpE (237 aa).

The tract at residues 1–65 (MTDSYKLPDN…DAREDDRDPT (65 aa)) is disordered. Positions 55 to 65 (VDAREDDRDPT) are enriched in basic and acidic residues.

The protein belongs to the GrpE family. As to quaternary structure, homodimer.

It localises to the cytoplasm. Functionally, participates actively in the response to hyperosmotic and heat shock by preventing the aggregation of stress-denatured proteins, in association with DnaK and GrpE. It is the nucleotide exchange factor for DnaK and may function as a thermosensor. Unfolded proteins bind initially to DnaJ; upon interaction with the DnaJ-bound protein, DnaK hydrolyzes its bound ATP, resulting in the formation of a stable complex. GrpE releases ADP from DnaK; ATP binding to DnaK triggers the release of the substrate protein, thus completing the reaction cycle. Several rounds of ATP-dependent interactions between DnaJ, DnaK and GrpE are required for fully efficient folding. The polypeptide is Protein GrpE (Corynebacterium efficiens (strain DSM 44549 / YS-314 / AJ 12310 / JCM 11189 / NBRC 100395)).